Reading from the N-terminus, the 486-residue chain is Probable cytosol aminopeptidase (486 aa).

Belongs to the peptidase M17 family. Mn(2+) is required as a cofactor.

The protein localises to the cytoplasm. It carries out the reaction Release of an N-terminal amino acid, Xaa-|-Yaa-, in which Xaa is preferably Leu, but may be other amino acids including Pro although not Arg or Lys, and Yaa may be Pro. Amino acid amides and methyl esters are also readily hydrolyzed, but rates on arylamides are exceedingly low.. The catalysed reaction is Release of an N-terminal amino acid, preferentially leucine, but not glutamic or aspartic acids.. Functionally, presumably involved in the processing and regular turnover of intracellular proteins. Catalyzes the removal of unsubstituted N-terminal amino acids from various peptides. This chain is Probable cytosol aminopeptidase (pepA), found in Synechococcus elongatus (strain ATCC 33912 / PCC 7942 / FACHB-805) (Anacystis nidulans R2).